Consider the following 199-residue polypeptide: ParB-like protein Saci_1498 (199 aa).

It belongs to the ParB family.

In terms of biological role, probably part of a 4-gene DNA damage response locus in which the upstream ups system, in combination with this downstream locus, functions in homologous recombination to rescue Sulfolobales from DNA-damaging threats. This protein might function in the DNA transfer machinery. The sequence is that of ParB-like protein Saci_1498 from Sulfolobus acidocaldarius (strain ATCC 33909 / DSM 639 / JCM 8929 / NBRC 15157 / NCIMB 11770).